A 194-amino-acid polypeptide reads, in one-letter code: ATP synthase subunit delta (194 aa).

This sequence belongs to the ATPase delta chain family. In terms of assembly, F-type ATPases have 2 components, F(1) - the catalytic core - and F(0) - the membrane proton channel. F(1) has five subunits: alpha(3), beta(3), gamma(1), delta(1), epsilon(1). F(0) has three main subunits: a(1), b(2) and c(10-14). The alpha and beta chains form an alternating ring which encloses part of the gamma chain. F(1) is attached to F(0) by a central stalk formed by the gamma and epsilon chains, while a peripheral stalk is formed by the delta and b chains.

It is found in the cell inner membrane. F(1)F(0) ATP synthase produces ATP from ADP in the presence of a proton or sodium gradient. F-type ATPases consist of two structural domains, F(1) containing the extramembraneous catalytic core and F(0) containing the membrane proton channel, linked together by a central stalk and a peripheral stalk. During catalysis, ATP synthesis in the catalytic domain of F(1) is coupled via a rotary mechanism of the central stalk subunits to proton translocation. Its function is as follows. This protein is part of the stalk that links CF(0) to CF(1). It either transmits conformational changes from CF(0) to CF(1) or is implicated in proton conduction. The chain is ATP synthase subunit delta from Bartonella quintana (strain Toulouse) (Rochalimaea quintana).